Here is a 499-residue protein sequence, read N- to C-terminus: Phenylalanine--tRNA ligase alpha subunit (499 aa).

Residues threonine 342, 381 to 383 (QID), and phenylalanine 422 contribute to the L-phenylalanine site. Mg(2+) is bound at residue glutamate 424. An L-phenylalanine-binding site is contributed by phenylalanine 447.

Belongs to the class-II aminoacyl-tRNA synthetase family. Phe-tRNA synthetase alpha subunit type 2 subfamily. As to quaternary structure, tetramer of two alpha and two beta subunits. The cofactor is Mg(2+).

The protein resides in the cytoplasm. The enzyme catalyses tRNA(Phe) + L-phenylalanine + ATP = L-phenylalanyl-tRNA(Phe) + AMP + diphosphate + H(+). The sequence is that of Phenylalanine--tRNA ligase alpha subunit from Thermococcus gammatolerans (strain DSM 15229 / JCM 11827 / EJ3).